Consider the following 379-residue polypeptide: Cobalt-precorrin-5B C(1)-methyltransferase (379 aa).

Belongs to the CbiD family.

It catalyses the reaction Co-precorrin-5B + S-adenosyl-L-methionine = Co-precorrin-6A + S-adenosyl-L-homocysteine. It participates in cofactor biosynthesis; adenosylcobalamin biosynthesis; cob(II)yrinate a,c-diamide from sirohydrochlorin (anaerobic route): step 6/10. In terms of biological role, catalyzes the methylation of C-1 in cobalt-precorrin-5B to form cobalt-precorrin-6A. The chain is Cobalt-precorrin-5B C(1)-methyltransferase from Salmonella choleraesuis (strain SC-B67).